A 2409-amino-acid polypeptide reads, in one-letter code: Reducing polyketide synthase FUB1 (2409 aa).

A compositionally biased stretch (low complexity) spans 1 to 43 (MTLSNGSNGANGTSNGHGAHPSANGFHNAANGGANNGTPNGGA). Positions 1 to 49 (MTLSNGSNGANGTSNGHGAHPSANGFHNAANGGANNGTPNGGAEYNASL) are disordered. The region spanning 57–479 (SSAIAVIGVS…GANAHAVLDD (423 aa)) is the Ketosynthase family 3 (KS3) domain. Active-site for beta-ketoacyl synthase activity residues include cysteine 230, histidine 365, and histidine 403. Residues 608-929 (TFIFTGQGAQ…FSAIKRKQDA (322 aa)) form a malonyl-CoA:ACP transacylase (MAT) domain region. Catalysis depends on serine 699, which acts as the For malonyltransferase activity. The tract at residues 994–1127 (LELLGVRDPR…GLVSTSYKRE (134 aa)) is N-terminal hotdog fold. Residues 994 to 1307 (LELLGVRDPR…TVPLRGASDP (314 aa)) enclose the PKS/mFAS DH domain. The dehydratase (DH) domain stretch occupies residues 995–1302 (ELLGVRDPRS…LEGCKTVPLR (308 aa)). Catalysis depends on histidine 1026, which acts as the Proton acceptor; for dehydratase activity. The C-terminal hotdog fold stretch occupies residues 1155 to 1307 (LPSVDPTVFY…TVPLRGASDP (153 aa)). The active-site Proton donor; for dehydratase activity is the aspartate 1220. The enoyl reductase (ER) domain stretch occupies residues 1713–2025 (GLLDTLEYLS…SGGHVGKIVL (313 aa)). The segment at 2049 to 2225 (ATYVLIGGLG…AATSINLSLV (177 aa)) is ketoreductase (KR) domain. The Carrier domain occupies 2328–2405 (EVYEIVLQQL…GFAKKVMAKS (78 aa)). The residue at position 2365 (serine 2365) is an O-(pantetheine 4'-phosphoryl)serine.

It participates in mycotoxin biosynthesis. Functionally, reducing polyketide synthase; part of the gene cluster that mediates the biosynthesis of fusaric acid, a mycotoxin with low to moderate toxicity to animals and humans, but with high phytotoxic properties. L-aspartate is suggested as fusaric acid amino acid precursor that is activated and further processed to O-acetyl-L-homoserine by cluster enzymes aspartate kinase FUB3 and homoserine O-acetyltransferase FUB5, as well as enzymes of the primary metabolism. The polyketide synthase (PKS) FUB1 generates the triketide trans-2-hexenal which is presumptively released by the hydrolase FUB4 and linked to the NRPS-bound amino acid precursor by NAD(P)-dependent dehydrogenase FUB6. FUB1, FUB4, and the non-canonical NRPS Fub8 may form an enzyme complex. Further processing of the NRPS-bound intermediate might be carried out by FUB6 and the sulfhydrylase FUB7, enabling a spontaneous electrocyclization to close the carbon backbone of fusaric acid. Dihydrofusaric acid is likely to be released via reduction by the thioester reductase (TR) domain of FUB8 whereupon the final oxidation to fusaric acid may (also) be performed by the FMN-dependent dehydrogenase FUB9. This Gibberella moniliformis (strain M3125 / FGSC 7600) (Maize ear and stalk rot fungus) protein is Reducing polyketide synthase FUB1.